Consider the following 98-residue polypeptide: Integration host factor subunit alpha (98 aa).

Residues 49–71 (FGNFDLRDKNQRPGRNPKTGEDI) form a disordered region.

The protein belongs to the bacterial histone-like protein family. In terms of assembly, heterodimer of an alpha and a beta chain.

This protein is one of the two subunits of integration host factor, a specific DNA-binding protein that functions in genetic recombination as well as in transcriptional and translational control. This chain is Integration host factor subunit alpha, found in Edwardsiella ictaluri (strain 93-146).